The primary structure comprises 537 residues: 2-succinyl-5-enolpyruvyl-6-hydroxy-3-cyclohexene-1-carboxylate synthase (537 aa).

It belongs to the TPP enzyme family. MenD subfamily. As to quaternary structure, homodimer. Mg(2+) serves as cofactor. Mn(2+) is required as a cofactor. The cofactor is thiamine diphosphate.

It catalyses the reaction isochorismate + 2-oxoglutarate + H(+) = 5-enolpyruvoyl-6-hydroxy-2-succinyl-cyclohex-3-ene-1-carboxylate + CO2. Its pathway is quinol/quinone metabolism; 1,4-dihydroxy-2-naphthoate biosynthesis; 1,4-dihydroxy-2-naphthoate from chorismate: step 2/7. It functions in the pathway quinol/quinone metabolism; menaquinone biosynthesis. Functionally, catalyzes the thiamine diphosphate-dependent decarboxylation of 2-oxoglutarate and the subsequent addition of the resulting succinic semialdehyde-thiamine pyrophosphate anion to isochorismate to yield 2-succinyl-5-enolpyruvyl-6-hydroxy-3-cyclohexene-1-carboxylate (SEPHCHC). This is 2-succinyl-5-enolpyruvyl-6-hydroxy-3-cyclohexene-1-carboxylate synthase from Dechloromonas aromatica (strain RCB).